Reading from the N-terminus, the 377-residue chain is Signal peptide peptidase (377 aa).

A disordered region spans residues 1–27; the sequence is MDSALSDPHNGSAEAGGPTNSTTRPPS. Residues 1–31 are Lumenal-facing; that stretch reads MDSALSDPHNGSAEAGGPTNSTTRPPSTPEG. N-linked (GlcNAc...) asparagine glycosylation is found at N10 and N20. A helical membrane pass occupies residues 32–52; it reads IALAYGSLLLMALLPIFFGAL. Residues 53 to 77 lie on the Cytoplasmic side of the membrane; sequence RSVRCARGKNASDMPETITSRDAAR. The helical transmembrane segment at 78–98 threads the bilayer; the sequence is FPIIASCTLLGLYLFFKIFSQ. Residues 99-100 lie on the Lumenal side of the membrane; it reads EY. A helical transmembrane segment spans residues 101-121; it reads INLLLSMYFFVLGILALSHTI. The Cytoplasmic portion of the chain corresponds to 122 to 157; the sequence is SPFMNKFFPASFPNRQYQLLFTQGSGENKEEIINYE. The chain crosses the membrane as a helical span at residues 158-178; the sequence is FDTKDLVCLGLSSIVGVWYLL. Residues 179 to 181 are Lumenal-facing; that stretch reads RKH. A helical membrane pass occupies residues 182-202; that stretch reads WIANNLFGLAFSLNGVELLHL. Residues 203 to 209 are Cytoplasmic-facing; that stretch reads NNVSTGC. Residues 210–230 form a helical membrane-spanning segment; it reads ILLGGLFIYDVFWVFGTNVMV. D219 is an active-site residue. At 231 to 256 the chain is on the lumenal side; that stretch reads TVAKSFEAPIKLVFPQDLLEKGLEAN. A helical membrane pass occupies residues 257–277; that stretch reads NFAMLGLGDVVIPGIFIALLL. Residue D265 is part of the active site. At 278-290 the chain is on the cytoplasmic side; sequence RFDISLKKNTHTY. The chain crosses the membrane as a helical span at residues 291 to 311; it reads FYTSFAAYIFGLGLTIFIMHI. The Lumenal portion of the chain corresponds to 312–314; the sequence is FKH. The chain crosses the membrane as a helical span at residues 315-335; sequence AQPALLYLVPACIGFPVLVAL. Residues 317–319 carry the PAL motif; it reads PAL. Over 336–377 the chain is Cytoplasmic; that stretch reads AKGEVTEMFSYEESNPKDPAAVTESKEGTEASASKGLEKKEK. The interval 345 to 377 is disordered; it reads SYEESNPKDPAAVTESKEGTEASASKGLEKKEK. S367 bears the Phosphoserine mark.

It belongs to the peptidase A22B family. As to quaternary structure, monomer. Homodimer. Interacts with RNF139. Interacts with DERL1 and XBP1 isoform 1. N-glycosylated. Widely expressed with highest levels in kidney, liver, placenta, lung, leukocytes and small intestine and reduced expression in heart and skeletal muscle. Expressed abundantly in the CNS with highest levels in thalamus and medulla.

The protein resides in the endoplasmic reticulum membrane. It is found in the membrane. Its subcellular location is the cell membrane. Functionally, catalyzes intramembrane proteolysis of signal peptides that have been removed from precursors of secretory and membrane proteins, resulting in the release of the fragment from the ER membrane into the cytoplasm. Required to generate lymphocyte cell surface (HLA-E) epitopes derived from MHC class I signal peptides. May be necessary for the removal of the signal peptide that remains attached to the hepatitis C virus core protein after the initial proteolytic processing of the polyprotein. Involved in the intramembrane cleavage of the integral membrane protein PSEN1. Cleaves the integral membrane protein XBP1 isoform 1 in a DERL1/RNF139-dependent manner. May play a role in graft rejection. The chain is Signal peptide peptidase from Homo sapiens (Human).